The following is a 317-amino-acid chain: MKI67 FHA domain-interacting nucleolar phosphoprotein (317 aa).

Residue alanine 2 is modified to N-acetylalanine. Lysine 40 participates in a covalent cross-link: Glycyl lysine isopeptide (Lys-Gly) (interchain with G-Cter in SUMO2). In terms of domain architecture, RRM spans 47–125 (GVVYLGHLPS…RLLSCKFMPR (79 aa)). At arginine 116 the chain carries Omega-N-methylarginine. Residues lysine 181 and lysine 194 each participate in a glycyl lysine isopeptide (Lys-Gly) (interchain with G-Cter in SUMO2) cross-link. Arginine 203 carries the post-translational modification Citrulline. Residues 203-317 (RDSEGNQVLP…KRPRKRKSKQ (115 aa)) are disordered. Over residues 213–233 (DQKEGLSGEPRRKEKMMKEDI) the composition is skewed to basic and acidic residues. Serine 219 is modified (phosphoserine). Over residues 238–248 (PKKRKRSRRKK) the composition is skewed to basic residues. Residue serine 253 is modified to Phosphoserine. Threonine 257 and threonine 261 each carry phosphothreonine. Basic and acidic residues predominate over residues 265–284 (LERRKSQVMEVGGDKDDEII). An omega-N-methylated arginine mark is found at arginine 267 and arginine 268. Serine 270 is modified (phosphoserine). A Glycyl lysine isopeptide (Lys-Gly) (interchain with G-Cter in SUMO1); alternate cross-link involves residue lysine 293. Residue lysine 293 forms a Glycyl lysine isopeptide (Lys-Gly) (interchain with G-Cter in SUMO2); alternate linkage. Threonine 301 bears the Phosphothreonine mark. Over residues 308–317 (KRPRKRKSKQ) the composition is skewed to basic residues.

In terms of assembly, binds to the FHA domain of MKI67; this interaction is enhanced in mitosis. Phosphorylated. In terms of processing, citrullinated by PADI4. As to expression, expressed in brain, heart, hind limb muscles, intestine, liver, skin and spleen.

It localises to the nucleus. It is found in the nucleolus. The protein localises to the chromosome. The chain is MKI67 FHA domain-interacting nucleolar phosphoprotein (Nifk) from Mus musculus (Mouse).